The following is a 598-amino-acid chain: Beta-fructofuranosidase, insoluble isoenzyme 2 (598 aa).

The signal sequence occupies residues 1-25; it reads MGVLGSRVAWAWLVQLLLLQQLAGA. The active site involves D69. 3 N-linked (GlcNAc...) asparagine glycosylation sites follow: N164, N189, and N348.

This sequence belongs to the glycosyl hydrolase 32 family.

The protein localises to the secreted. It localises to the extracellular space. Its subcellular location is the apoplast. The protein resides in the cell wall. It catalyses the reaction Hydrolysis of terminal non-reducing beta-D-fructofuranoside residues in beta-D-fructofuranosides.. May play a role in sucrose partitioning during seed development. In Oryza sativa subsp. indica (Rice), this protein is Beta-fructofuranosidase, insoluble isoenzyme 2 (CIN2).